The sequence spans 297 residues: HTH-type transcriptional regulator ArgP (297 aa).

The HTH lysR-type domain occupies 4 to 60 (PDYRTLQALDAVIRERGFERAAQKLCITQSAVSQRIKQLENMFGQPLLVRTVPPRPT). A DNA-binding region (H-T-H motif) is located at residues 21–40 (FERAAQKLCITQSAVSQRIK).

The protein belongs to the LysR transcriptional regulatory family. In terms of assembly, homodimer.

Controls the transcription of genes involved in arginine and lysine metabolism. This chain is HTH-type transcriptional regulator ArgP, found in Klebsiella pneumoniae (strain 342).